Here is a 947-residue protein sequence, read N- to C-terminus: Bifunctional glutamine synthetase adenylyltransferase/adenylyl-removing enzyme (947 aa).

Residues 1-440 (MTPLSSPLSQ…VFNELIGDDE (440 aa)) are adenylyl removase. The interval 450–947 (SEPWREVWQD…ASWRKWLVAV (498 aa)) is adenylyl transferase.

The protein belongs to the GlnE family. It depends on Mg(2+) as a cofactor.

It carries out the reaction [glutamine synthetase]-O(4)-(5'-adenylyl)-L-tyrosine + phosphate = [glutamine synthetase]-L-tyrosine + ADP. It catalyses the reaction [glutamine synthetase]-L-tyrosine + ATP = [glutamine synthetase]-O(4)-(5'-adenylyl)-L-tyrosine + diphosphate. Its function is as follows. Involved in the regulation of glutamine synthetase GlnA, a key enzyme in the process to assimilate ammonia. When cellular nitrogen levels are high, the C-terminal adenylyl transferase (AT) inactivates GlnA by covalent transfer of an adenylyl group from ATP to specific tyrosine residue of GlnA, thus reducing its activity. Conversely, when nitrogen levels are low, the N-terminal adenylyl removase (AR) activates GlnA by removing the adenylyl group by phosphorolysis, increasing its activity. The regulatory region of GlnE binds the signal transduction protein PII (GlnB) which indicates the nitrogen status of the cell. The protein is Bifunctional glutamine synthetase adenylyltransferase/adenylyl-removing enzyme of Salmonella typhimurium (strain LT2 / SGSC1412 / ATCC 700720).